Reading from the N-terminus, the 1071-residue chain is Exportin-1 (1071 aa).

A necessary for HTLV-1 Rex-mediated mRNA export region spans residues 1–679 (MPAIMTMLAD…QQATKNVDIL (679 aa)). Residues 46 to 112 (AQEVLTHLKE…KKYVVGLIIK (67 aa)) enclose the Importin N-terminal domain. 6 HEAT repeats span residues 217 to 240 (QNAP…PLGY), 241 to 277 (IFET…VSVS), 354 to 472 (MLLV…YVDT), 515 to 553 (RFLV…QYPR), 560 to 597 (KFLK…KCRR), and 602 to 639 (VQVG…AVGY). Residues 327-450 (CTFLKEHDQL…VREFMKDTDS (124 aa)) form an interaction with Ran and nuclear export complex formation region. At Ser-391 the chain carries Phosphoserine. The segment at 411–414 (PMLF) is necessary for HTLV-1 Rex multimerization. The interaction with RANBP3 stretch occupies residues 411–481 (PMLFKVRLLM…TERIMTEKLH (71 aa)). The residue at position 446 (Lys-446) is an N6-acetyllysine. Position 448 is a phosphothreonine (Thr-448). Ser-450 carries the post-translational modification Phosphoserine. Tyr-454 is subject to Phosphotyrosine. Residue Lys-693 is modified to N6-acetyllysine. 4 HEAT repeats span residues 775 to 813 (NFVP…KLGG), 885 to 916 (TMRN…SFYQ), 917 to 954 (TYFC…NLVE), and 1002 to 1039 (FSLN…EERE). Positions 800–820 (VLSTMAIIVNKLGGHITAEIP) are interaction with HIV-1 Rev. Position 1031 is a phosphoserine (Ser-1031).

The protein belongs to the exportin family. In terms of assembly, found in a U snRNA export complex with PHAX/RNUXA, NCBP1/CBP80, NCBP2/CBP20, RAN, XPO1 and m7G-capped RNA. Component of a nuclear export receptor complex composed of KPNB1, RAN, SNUPN and XPO1. Found in a trimeric export complex with SNUPN, RAN and XPO1. Found in a nuclear export complex with RANBP3 and RAN. Found in a 60S ribosomal subunit export complex with NMD3, RAN, XPO1. Interacts with DDX3X, NMD3, NUP42, NUP88, NUP214, RANBP3 and TERT. Interacts with NEMF (via its N-terminus). Interacts with the monomeric form of BIRC5/survivin deacetylated at 'Lys-129'. Interacts with DTNBP1 and SERTAD2; the interactions translocate DTNBP1 and SERTAD2 out of the nucleus. Interacts with ATF2. Interacts with SLC35G1 and STIM1. Interacts with DCAF8. Interacts with CPEB3. Interacts with HAX1. Interacts with BOK; translocates to the cytoplasm. Interacts with HSP90AB1. Interacts with LRPPRC; interacts with LRPPRC alone and also when LRPPRC is in complex with EIF4E and with EIF4E sensitivity element (4ESE)-containing mRNAs to form an EIF4E-dependent mRNA export complex. (Microbial infection) Interacts with HIV-1 Rev. As to quaternary structure, (Microbial infection) Interacts with HTLV-1 Rex. In terms of assembly, (Microbial infection) Interacts with influenza A nucleoprotein. (Microbial infection) Interacts with Epstein-Barr virus protein BMLF1. As to quaternary structure, (Microbial infection) Part of a tetrameric complex composed of CRM1, importin alpha/beta dimer and the Venezuelan equine encephalitis virus (VEEV) capsid; this complex blocks the receptor-mediated transport through the nuclear pore. In terms of assembly, (Microbial infection) Interacts with SARS-CoV virus protein ORF9b; this interaction mediates protein ORF9b export out of the nucleus. Expressed in heart, brain, placenta, lung, liver, skeletal muscle, pancreas, spleen, thymus, prostate, testis, ovary, small intestine, colon and peripheral blood leukocytes. Not expressed in the kidney.

Its subcellular location is the cytoplasm. The protein localises to the nucleus. It is found in the nucleoplasm. The protein resides in the cajal body. It localises to the nucleolus. Functionally, mediates the nuclear export of cellular proteins (cargos) bearing a leucine-rich nuclear export signal (NES) and of RNAs. In the nucleus, in association with RANBP3, binds cooperatively to the NES on its target protein and to the GTPase RAN in its active GTP-bound form (Ran-GTP). Docking of this complex to the nuclear pore complex (NPC) is mediated through binding to nucleoporins. Upon transit of a nuclear export complex into the cytoplasm, disassembling of the complex and hydrolysis of Ran-GTP to Ran-GDP (induced by RANBP1 and RANGAP1, respectively) cause release of the cargo from the export receptor. The directionality of nuclear export is thought to be conferred by an asymmetric distribution of the GTP- and GDP-bound forms of Ran between the cytoplasm and nucleus. Involved in U3 snoRNA transport from Cajal bodies to nucleoli. Binds to late precursor U3 snoRNA bearing a TMG cap. In terms of biological role, (Microbial infection) Mediates the export of unspliced or incompletely spliced RNAs out of the nucleus from different viruses including HIV-1, HTLV-1 and influenza A. Interacts with, and mediates the nuclear export of HIV-1 Rev and HTLV-1 Rex proteins. Involved in HTLV-1 Rex multimerization. The chain is Exportin-1 (XPO1) from Homo sapiens (Human).